Consider the following 307-residue polypeptide: Ras-related protein Rab-33 (307 aa).

The segment at 19–80 is disordered; that stretch reads VIDPPKHVTA…IPPAPEAVTA (62 aa). 2 stretches are compositionally biased toward pro residues: residues 42 to 56 and 65 to 75; these read PTHP…PAVP and PTAPPPIPPAP. 107–114 is a binding site for GTP; the sequence is GNAAVGKT. Positions 129–137 match the Effector region motif; the sequence is TEATIGVDF. Residues 155–159 and 217–220 contribute to the GTP site; these read DTAGQ and NKCD. Residues C306 and C307 are each lipidated (S-geranylgeranyl cysteine).

This sequence belongs to the small GTPase superfamily. Rab family.

It localises to the cell membrane. The chain is Ras-related protein Rab-33 (rab-33) from Caenorhabditis elegans.